Here is a 369-residue protein sequence, read N- to C-terminus: 4-hydroxy-3-methylbut-2-en-1-yl diphosphate synthase (flavodoxin) (369 aa).

[4Fe-4S] cluster is bound by residues Cys270, Cys273, Cys305, and Glu312.

This sequence belongs to the IspG family. Requires [4Fe-4S] cluster as cofactor.

It carries out the reaction (2E)-4-hydroxy-3-methylbut-2-enyl diphosphate + oxidized [flavodoxin] + H2O + 2 H(+) = 2-C-methyl-D-erythritol 2,4-cyclic diphosphate + reduced [flavodoxin]. It functions in the pathway isoprenoid biosynthesis; isopentenyl diphosphate biosynthesis via DXP pathway; isopentenyl diphosphate from 1-deoxy-D-xylulose 5-phosphate: step 5/6. Its function is as follows. Converts 2C-methyl-D-erythritol 2,4-cyclodiphosphate (ME-2,4cPP) into 1-hydroxy-2-methyl-2-(E)-butenyl 4-diphosphate. This chain is 4-hydroxy-3-methylbut-2-en-1-yl diphosphate synthase (flavodoxin), found in Pseudomonas putida (strain GB-1).